The sequence spans 346 residues: MSEPARLISPEKRGEDLDMTLRPQSLDEFTGQAEARANLKVFIEAAKNRGEALDHVLFVGPPGLGKTTLAQIMAKELGVNFRSTSGPVIAKAGDLAALLTNLEERDVLFIDEIHRLNPAVEEILYPAMEDFQLDLIIGEGPAARSVKIDLSKFTLVAATTRLGLLTTPLRDRFGIPVRLSFYTVEELELIVRRGARLMNLPMTEEGAREIARRARGTPRIAGRLLRRVRDFAEVARAEAVTREIADEALTRLLVDNVGFDQLDKRYLNMIAVNFGGGPVGIETIAAGLSEPRDAIEDIIEPYMIQQGFIQRTPRGRVLTAIAWKHLGMQPPKEMEAAQFRLFQEDD.

Residues 1 to 182 (MSEPARLISP…FGIPVRLSFY (182 aa)) are large ATPase domain (RuvB-L). ATP is bound by residues Leu-21, Arg-22, Gly-63, Lys-66, Thr-67, Thr-68, 129-131 (EDF), Arg-172, Tyr-182, and Arg-219. Thr-67 serves as a coordination point for Mg(2+). The tract at residues 183-253 (TVEELELIVR…IADEALTRLL (71 aa)) is small ATPAse domain (RuvB-S). The interval 256–346 (NVGFDQLDKR…AQFRLFQEDD (91 aa)) is head domain (RuvB-H). DNA contacts are provided by Arg-292, Arg-311, and Arg-316.

Belongs to the RuvB family. As to quaternary structure, homohexamer. Forms an RuvA(8)-RuvB(12)-Holliday junction (HJ) complex. HJ DNA is sandwiched between 2 RuvA tetramers; dsDNA enters through RuvA and exits via RuvB. An RuvB hexamer assembles on each DNA strand where it exits the tetramer. Each RuvB hexamer is contacted by two RuvA subunits (via domain III) on 2 adjacent RuvB subunits; this complex drives branch migration. In the full resolvosome a probable DNA-RuvA(4)-RuvB(12)-RuvC(2) complex forms which resolves the HJ.

The protein localises to the cytoplasm. The catalysed reaction is ATP + H2O = ADP + phosphate + H(+). Its function is as follows. The RuvA-RuvB-RuvC complex processes Holliday junction (HJ) DNA during genetic recombination and DNA repair, while the RuvA-RuvB complex plays an important role in the rescue of blocked DNA replication forks via replication fork reversal (RFR). RuvA specifically binds to HJ cruciform DNA, conferring on it an open structure. The RuvB hexamer acts as an ATP-dependent pump, pulling dsDNA into and through the RuvAB complex. RuvB forms 2 homohexamers on either side of HJ DNA bound by 1 or 2 RuvA tetramers; 4 subunits per hexamer contact DNA at a time. Coordinated motions by a converter formed by DNA-disengaged RuvB subunits stimulates ATP hydrolysis and nucleotide exchange. Immobilization of the converter enables RuvB to convert the ATP-contained energy into a lever motion, pulling 2 nucleotides of DNA out of the RuvA tetramer per ATP hydrolyzed, thus driving DNA branch migration. The RuvB motors rotate together with the DNA substrate, which together with the progressing nucleotide cycle form the mechanistic basis for DNA recombination by continuous HJ branch migration. Branch migration allows RuvC to scan DNA until it finds its consensus sequence, where it cleaves and resolves cruciform DNA. The sequence is that of Holliday junction branch migration complex subunit RuvB from Rhizobium etli (strain CIAT 652).